The sequence spans 630 residues: Low affinity heme transporter str3 (630 aa).

The span at Met1 to Glu26 shows a compositional bias: basic and acidic residues. The tract at residues Met1 to Thr51 is disordered. Residues Met1–Arg79 lie on the Cytoplasmic side of the membrane. Phosphoserine is present on residues Ser10 and Ser38. The helical transmembrane segment at Gly80 to Ile100 threads the bilayer. The Extracellular segment spans residues Gln101–Ser120. Residues Met121–Gly141 traverse the membrane as a helical segment. Topologically, residues Lys142–Thr154 are cytoplasmic. Residues Leu155–Ala175 traverse the membrane as a helical segment. Tyr176 is a topological domain (extracellular). Residues Val177–Val197 form a helical membrane-spanning segment. Residues Val198–Gly208 are Cytoplasmic-facing. Residues Phe209 to Val229 traverse the membrane as a helical segment. The Extracellular portion of the chain corresponds to Gln230–Tyr241. The chain crosses the membrane as a helical span at residues Gly242 to Leu262. At Glu263 to Asp302 the chain is on the cytoplasmic side. Residues Leu303–Thr323 traverse the membrane as a helical segment. Over Ser324 to Met335 the chain is Extracellular. Residues Ile336–Ile356 form a helical membrane-spanning segment. Over Ala357–Thr370 the chain is Cytoplasmic. Residues Phe371 to Tyr391 form a helical membrane-spanning segment. At Phe392–Asp406 the chain is on the extracellular side. The helical transmembrane segment at Trp407 to Ala427 threads the bilayer. Over Met428 to Gln439 the chain is Cytoplasmic. The chain crosses the membrane as a helical span at residues Ile440–Ala460. Over Thr461–Asp465 the chain is Extracellular. The chain crosses the membrane as a helical span at residues Leu466–Val486. The Cytoplasmic segment spans residues Ser487–Ser502. A helical membrane pass occupies residues Leu503–Phe523. Residues Ile522–Phe576 are heme binding. At Ser524–Ser574 the chain is on the extracellular side. The helical transmembrane segment at Met575–Trp595 threads the bilayer. The Cytoplasmic portion of the chain corresponds to Gln596 to Ile630. The segment at Gly610 to Ile630 is disordered. Residues Asp611 to Ile630 are compositionally biased toward basic and acidic residues.

This sequence belongs to the major facilitator superfamily.

It localises to the cell membrane. In terms of biological role, low affinity heme transporter involved in the assimilation of exogenous heme during conditions of low cellular iron. This Schizosaccharomyces pombe (strain 972 / ATCC 24843) (Fission yeast) protein is Low affinity heme transporter str3.